Here is a 1828-residue protein sequence, read N- to C-terminus: InaD-like protein (1828 aa).

Positions 5-65 constitute an L27 domain; sequence PAPDKLQVLQ…SIKQLKGQLS (61 aa). 3 PDZ domains span residues 134-221, 248-328, and 365-453; these read YIDI…AREP, DVEL…ARDP, and GVEL…VRRK. Phosphoserine is present on residues Ser-459 and Ser-522. One can recognise a PDZ 4 domain in the interval 553-639; that stretch reads DAELQKYSKL…PFTLVCCRRL (87 aa). Ser-645 bears the Phosphoserine mark. 2 consecutive PDZ domains span residues 686–758 and 1070–1162; these read IVEL…EVLK and IVEI…QSLS. Residues 1168 to 1220 are disordered; the sequence is IPSVHNKANKIANNQDQNTEEKKEKRQGTPPPPMKLPPPYKAPSDDSDENEEE. Over residues 1196–1208 the composition is skewed to pro residues; the sequence is TPPPPMKLPPPYK. Ser-1211 is subject to Phosphoserine. Residues 1241 to 1324 form the PDZ 7 domain; sequence IIELEKDKNG…KVKLVFIRNE (84 aa). Residues 1333 to 1362 are disordered; sequence APFPVPSSSPSSLEDQSGTEPVSSEEDGSL. The span at 1345-1354 shows a compositional bias: polar residues; it reads LEDQSGTEPV. 2 PDZ domains span residues 1464-1547 and 1560-1642; these read IIEI…YRDE and PVDL…GRLR. A Phosphothreonine modification is found at Thr-1535. Polar residues predominate over residues 1645-1668; that stretch reads SWTSSRKTSQNSQGSQHSTHSSFH. The interval 1645 to 1669 is disordered; that stretch reads SWTSSRKTSQNSQGSQHSTHSSFHP. The 87-residue stretch at 1703–1789 folds into the PDZ 10 domain; the sequence is TVEIIRELSD…RIILQVVADT (87 aa). The tract at residues 1805 to 1828 is disordered; that stretch reads YHLGSPTAEHHPEDTEEPLQMTAG.

Forms a ternary complex with PALS1 and CRB1. Component of a complex whose core is composed of ARHGAP17, AMOT, PALS1, INADL/PATJ and PARD3/PAR3. Forms a heterotrimeric complex composed of MMP5, LIN7B and PATJ; the N-terminal L27 domain of PALS1 interacts with the L27 domain of PATJ and the C-terminal L27 domain of PALS1 interacts with the L27 domain of LIN7B. Component of a complex composed of CRB3, PALS1 and PATJ. As part of the Crumbs complex; interacts with WWP1, the interaction is enhanced by AMOTL2 and facilitates WWP1 localization to the plasma membrane. The Crumbs complex promotes monoubiquitination of AMOTL2 by WWP1, which activates the Hippo signaling pathway. Interacts (via N-terminus) with PALS1/PALS (via PDZ domain). Interacts with TJP3/ZO-3 and CLDN1/claudin-1. Interacts with ASIC3, KCNJ10, KCNJ15, GRIN2A, GRIN2B, GRIN2C, GRIN2D, NLGN2, and HTR2A. Interacts with MPP7. Directly interacts with HTR4. Interacts (via PDZ domain 8) with WWC1 (via the ADDV motif). Interacts with SLC6A4. Interacts (via C-terminus) with ARHGEF18. Interacts with NPHP1. Interacts with PARD3/PAR3. Interacts (via PDZ1-6 domains) with TJP1/ZO1; the interaction is required for attachment and extension of TJP1/ZO1 condensates along the apical cell interface.

It is found in the cell junction. The protein localises to the tight junction. The protein resides in the apical cell membrane. Its subcellular location is the cytoplasm. It localises to the perinuclear region. In terms of biological role, scaffolding protein that facilitates the localization of proteins to the cell membrane. Required for the correct formation of tight junctions and epithelial apico-basal polarity. Acts (via its L27 domain) as an apical connector and elongation factor for multistranded TJP1/ZO1 condensates that form a tight junction belt, thereby required for the formation of the tight junction-mediated cell barrier. Positively regulates epithelial cell microtubule elongation and cell migration, possibly via facilitating localization of PRKCI/aPKC and PAR3D/PAR3 at the leading edge of migrating cells. Plays a role in the correct reorientation of the microtubule-organizing center during epithelial migration. May regulate the surface expression and/or function of ASIC3 in sensory neurons. May recruit ARHGEF18 to apical cell-cell boundaries. The chain is InaD-like protein from Canis lupus familiaris (Dog).